The following is a 573-amino-acid chain: Formate--tetrahydrofolate ligase 3 (573 aa).

66 to 73 (TPLGEGKT) contributes to the ATP binding site.

This sequence belongs to the formate--tetrahydrofolate ligase family.

It carries out the reaction (6S)-5,6,7,8-tetrahydrofolate + formate + ATP = (6R)-10-formyltetrahydrofolate + ADP + phosphate. It participates in one-carbon metabolism; tetrahydrofolate interconversion. The chain is Formate--tetrahydrofolate ligase 3 from Rubrobacter xylanophilus (strain DSM 9941 / JCM 11954 / NBRC 16129 / PRD-1).